Consider the following 187-residue polypeptide: Large ribosomal subunit protein uL10 (187 aa).

Belongs to the universal ribosomal protein uL10 family. In terms of assembly, part of the ribosomal stalk of the 50S ribosomal subunit. The N-terminus interacts with L11 and the large rRNA to form the base of the stalk. The C-terminus forms an elongated spine to which L12 dimers bind in a sequential fashion forming a multimeric L10(L12)X complex.

Functionally, forms part of the ribosomal stalk, playing a central role in the interaction of the ribosome with GTP-bound translation factors. The polypeptide is Large ribosomal subunit protein uL10 (Roseiflexus castenholzii (strain DSM 13941 / HLO8)).